The sequence spans 105 residues: Replication restart protein PriB (105 aa).

In terms of domain architecture, SSB spans 1-102; the sequence is MTANRLTLSG…LHAEQIELID (102 aa).

This sequence belongs to the PriB family. In terms of assembly, homodimer. Interacts with PriA and DnaT. Component of the replication restart primosome. Primosome assembly occurs via a 'hand-off' mechanism. PriA binds to replication forks, subsequently PriB then DnaT bind; DnaT then displaces ssDNA to generate the helicase loading substrate.

In terms of biological role, involved in the restart of stalled replication forks, which reloads the replicative helicase on sites other than the origin of replication; the PriA-PriB pathway is the major replication restart pathway. During primosome assembly it facilitates complex formation between PriA and DnaT on DNA; stabilizes PriA on DNA. Stimulates the DNA unwinding activity of PriA helicase. The protein is Replication restart protein PriB of Erwinia tasmaniensis (strain DSM 17950 / CFBP 7177 / CIP 109463 / NCPPB 4357 / Et1/99).